We begin with the raw amino-acid sequence, 552 residues long: MFS-type transporter atr4 (552 aa).

The segment at 1 to 102 (MEDPKSLSAP…NIVDWDGPND (102 aa)) is disordered. A compositionally biased stretch (low complexity) spans 16 to 27 (ADTTTADETPAA). Polar residues-rich tracts occupy residues 38–47 (KAGSESSENT) and 71–80 (LRNSSVSRSN). Residue N73 is glycosylated (N-linked (GlcNAc...) asparagine). 6 consecutive transmembrane segments (helical) span residues 118 to 138 (IFLV…LATG), 153 to 173 (LGSL…LVIA), 182 to 202 (MPLY…CALG), 214 to 234 (LQGC…SDLI), 244 to 264 (GIYA…GGFL), and 272 to 292 (WLMW…FVVM). An N-linked (GlcNAc...) asparagine glycan is attached at N314. The next 6 membrane-spanning stretches (helical) occupy residues 346–366 (PIIF…YLLF), 385–405 (GLVY…FGVF), 425–445 (LLPM…YGWS), 452–472 (WIVP…TLVC), 498–518 (VVGA…GIGW), and 521–541 (SLLA…YVYG).

Belongs to the major facilitator superfamily.

Its subcellular location is the cell membrane. Functionally, MFS-type transporter; part of the gene cluster that mediates the biosynthesis of atranorin, a depside of polyketide origin that accumulates in the cortical or medullary layers of lichen thalli. In Stereocaulon alpinum (Alpine snow lichen), this protein is MFS-type transporter atr4.